Here is a 446-residue protein sequence, read N- to C-terminus: Coiled-coil domain-containing protein 112 (446 aa).

Coiled coils occupy residues Lys35–Asp116 and Glu219–Arg400. Disordered regions lie at residues Phe253–Lys272 and Leu390–Ile430. Positions Asn255 to Arg268 are enriched in basic and acidic residues.

Its subcellular location is the cytoplasm. It is found in the cytoskeleton. It localises to the microtubule organizing center. The protein resides in the centrosome. The protein localises to the centriolar satellite. This chain is Coiled-coil domain-containing protein 112 (CCDC112), found in Homo sapiens (Human).